A 251-amino-acid polypeptide reads, in one-letter code: NADPH-dependent oxidoreductase (251 aa).

This sequence belongs to the flavin oxidoreductase frp family. It depends on FMN as a cofactor.

Reduces FMN, organic nitro compounds and disulfide DTNB. Involved in maintenance of the cellular redox state and the disulfide stress response. The protein is NADPH-dependent oxidoreductase (nfrA) of Staphylococcus epidermidis (strain ATCC 35984 / DSM 28319 / BCRC 17069 / CCUG 31568 / BM 3577 / RP62A).